The primary structure comprises 241 residues: Proteasome subunit beta type-1 (241 aa).

Position 1 is an N-acetylmethionine (M1). A propeptide spanning residues 1 to 28 (MLSSVAAYSGAGRDLAMEPHSSVGPLQL) is cleaved from the precursor. Residue S58 is glycosylated (O-linked (GlcNAc) serine). Residues S62 and S68 each carry the phosphoserine modification. Y150 is modified (phosphotyrosine). A Phosphoserine modification is found at S162. K204 bears the N6-acetyllysine mark. S209 is a glycosylation site (O-linked (GlcNAc) serine).

The protein belongs to the peptidase T1B family. As to quaternary structure, the 26S proteasome consists of a 20S proteasome core and two 19S regulatory subunits. The 20S proteasome core is a barrel-shaped complex made of 28 subunits that are arranged in four stacked rings. The two outer rings are each formed by seven alpha subunits, and the two inner rings are formed by seven beta subunits. The proteolytic activity is exerted by three beta-subunits PSMB5, PSMB6 and PSMB7. Interacts with SERPINB2. Interacts with RFPL4A.

Its subcellular location is the cytoplasm. It localises to the nucleus. In terms of biological role, non-catalytic component of the 20S core proteasome complex involved in the proteolytic degradation of most intracellular proteins. This complex plays numerous essential roles within the cell by associating with different regulatory particles. Associated with two 19S regulatory particles, forms the 26S proteasome and thus participates in the ATP-dependent degradation of ubiquitinated proteins. The 26S proteasome plays a key role in the maintenance of protein homeostasis by removing misfolded or damaged proteins that could impair cellular functions, and by removing proteins whose functions are no longer required. Associated with the PA200 or PA28, the 20S proteasome mediates ubiquitin-independent protein degradation. This type of proteolysis is required in several pathways including spermatogenesis (20S-PA200 complex) or generation of a subset of MHC class I-presented antigenic peptides (20S-PA28 complex). In Bos taurus (Bovine), this protein is Proteasome subunit beta type-1 (PSMB1).